The chain runs to 89 residues: Exodeoxyribonuclease 7 small subunit (89 aa).

The protein belongs to the XseB family. As to quaternary structure, heterooligomer composed of large and small subunits.

It is found in the cytoplasm. The catalysed reaction is Exonucleolytic cleavage in either 5'- to 3'- or 3'- to 5'-direction to yield nucleoside 5'-phosphates.. In terms of biological role, bidirectionally degrades single-stranded DNA into large acid-insoluble oligonucleotides, which are then degraded further into small acid-soluble oligonucleotides. This Chlorobium phaeobacteroides (strain DSM 266 / SMG 266 / 2430) protein is Exodeoxyribonuclease 7 small subunit.